An 83-amino-acid chain; its full sequence is Cytochrome b559 subunit alpha (83 aa).

Residues 21–35 (VIHSITIPSLFIAGW) form a helical membrane-spanning segment. His23 provides a ligand contact to heme.

Belongs to the PsbE/PsbF family. Heterodimer of an alpha subunit and a beta subunit. PSII is composed of 1 copy each of membrane proteins PsbA, PsbB, PsbC, PsbD, PsbE, PsbF, PsbH, PsbI, PsbJ, PsbK, PsbL, PsbM, PsbT, PsbX, PsbY, PsbZ, Psb30/Ycf12, at least 3 peripheral proteins of the oxygen-evolving complex and a large number of cofactors. It forms dimeric complexes. Heme b serves as cofactor.

Its subcellular location is the plastid. The protein resides in the chloroplast thylakoid membrane. Functionally, this b-type cytochrome is tightly associated with the reaction center of photosystem II (PSII). PSII is a light-driven water:plastoquinone oxidoreductase that uses light energy to abstract electrons from H(2)O, generating O(2) and a proton gradient subsequently used for ATP formation. It consists of a core antenna complex that captures photons, and an electron transfer chain that converts photonic excitation into a charge separation. This is Cytochrome b559 subunit alpha from Citrus sinensis (Sweet orange).